The primary structure comprises 542 residues: Chondroitin sulfate N-acetylgalactosaminyltransferase 2 (542 aa).

The Cytoplasmic segment spans residues 1–13; sequence MSRRGSILHSRTQ. The chain crosses the membrane as a helical; Signal-anchor for type II membrane protein span at residues 14–34; the sequence is WLLLGLALLFSLVLFMYLLEC. At 35–542 the chain is on the lumenal side; that stretch reads APQTDGNASL…AYRTNSETAG (508 aa). N-linked (GlcNAc...) asparagine glycosylation is present at Asn41. The stretch at 59–105 forms a coiled coil; that stretch reads ALLQEQEEHYQTRATSLKRQIAQLKQELQDMSEKMRALQERKKLGAN. Asn333 carries an N-linked (GlcNAc...) asparagine glycan. Asp369 and His486 together coordinate a divalent metal cation.

It belongs to the chondroitin N-acetylgalactosaminyltransferase family.

The protein resides in the golgi apparatus. It localises to the golgi stack membrane. The enzyme catalyses 3-O-(beta-D-GlcA-(1-&gt;3)-beta-D-Gal-(1-&gt;3)-beta-D-Gal-(1-&gt;4)-beta-D-Xyl)-L-seryl-[protein] + UDP-N-acetyl-alpha-D-galactosamine = 3-O-(beta-D-GalNAc-(1-&gt;4)-beta-D-GlcA-(1-&gt;3)-beta-D-Gal-(1-&gt;3)-beta-D-Gal-(1-&gt;4)-beta-D-Xyl)-L-seryl-[protein] + UDP + H(+). Its function is as follows. Transfers 1,4-N-acetylgalactosamine (GalNAc) from UDP-GalNAc to the non-reducing end of glucuronic acid (GlcUA). Required for addition of the first GalNAc to the core tetrasaccharide linker and for elongation of chondroitin chains. The polypeptide is Chondroitin sulfate N-acetylgalactosaminyltransferase 2 (Csgalnact2) (Mus musculus (Mouse)).